The following is a 497-amino-acid chain: Probable cytosol aminopeptidase (497 aa).

Mn(2+)-binding residues include Lys-265 and Asp-270. Lys-277 is an active-site residue. Residues Asp-288, Asp-347, and Glu-349 each coordinate Mn(2+). Residue Arg-351 is part of the active site.

The protein belongs to the peptidase M17 family. Requires Mn(2+) as cofactor.

Its subcellular location is the cytoplasm. The catalysed reaction is Release of an N-terminal amino acid, Xaa-|-Yaa-, in which Xaa is preferably Leu, but may be other amino acids including Pro although not Arg or Lys, and Yaa may be Pro. Amino acid amides and methyl esters are also readily hydrolyzed, but rates on arylamides are exceedingly low.. The enzyme catalyses Release of an N-terminal amino acid, preferentially leucine, but not glutamic or aspartic acids.. In terms of biological role, presumably involved in the processing and regular turnover of intracellular proteins. Catalyzes the removal of unsubstituted N-terminal amino acids from various peptides. The protein is Probable cytosol aminopeptidase of Geobacillus sp. (strain WCH70).